A 297-amino-acid polypeptide reads, in one-letter code: MTSSTSQITGSIVALVTPMLDDGSVDYPALRKLIDWHIAEGTDCIGVVGTTGESPTVNVQEHCEIIRVAVEQAAGRVPIMAGCGANCTAEAIELTQFAKKVGADCQLQVVPYYNKPTQEGQYRHFKAIAEAVDLPMVLYNVPGRAVADMAHDTVLRLAQVPGIVGIKEATGQIDRAQWLIREAPKGFAIYSGDDPTAVALMLCGGHGNVSVTANIAPRLMHELCVAAMAGDTKRAMEIQFKLLPLHKNLFIEANPIPVKWAVARLKLCGGTLRLPMTPLTPANEAALESALHASGLL.

Pyruvate is bound at residue Thr51. The Proton donor/acceptor role is filled by Tyr139. The active-site Schiff-base intermediate with substrate is the Lys167. Residue Val209 coordinates pyruvate.

The protein belongs to the DapA family. Homotetramer; dimer of dimers.

The protein resides in the cytoplasm. The enzyme catalyses L-aspartate 4-semialdehyde + pyruvate = (2S,4S)-4-hydroxy-2,3,4,5-tetrahydrodipicolinate + H2O + H(+). It functions in the pathway amino-acid biosynthesis; L-lysine biosynthesis via DAP pathway; (S)-tetrahydrodipicolinate from L-aspartate: step 3/4. Its function is as follows. Catalyzes the condensation of (S)-aspartate-beta-semialdehyde [(S)-ASA] and pyruvate to 4-hydroxy-tetrahydrodipicolinate (HTPA). The polypeptide is 4-hydroxy-tetrahydrodipicolinate synthase (Albidiferax ferrireducens (strain ATCC BAA-621 / DSM 15236 / T118) (Rhodoferax ferrireducens)).